A 101-amino-acid polypeptide reads, in one-letter code: NAD(P)H-quinone oxidoreductase subunit 4L, chloroplastic (101 aa).

3 helical membrane-spanning segments follow: residues 2-22 (MLEH…YGLI), 32-52 (MCLE…SDFF), and 61-81 (IFSI…PAIV).

It belongs to the complex I subunit 4L family. NDH is composed of at least 16 different subunits, 5 of which are encoded in the nucleus.

It is found in the plastid. It localises to the chloroplast thylakoid membrane. The enzyme catalyses a plastoquinone + NADH + (n+1) H(+)(in) = a plastoquinol + NAD(+) + n H(+)(out). It catalyses the reaction a plastoquinone + NADPH + (n+1) H(+)(in) = a plastoquinol + NADP(+) + n H(+)(out). In terms of biological role, NDH shuttles electrons from NAD(P)H:plastoquinone, via FMN and iron-sulfur (Fe-S) centers, to quinones in the photosynthetic chain and possibly in a chloroplast respiratory chain. The immediate electron acceptor for the enzyme in this species is believed to be plastoquinone. Couples the redox reaction to proton translocation, and thus conserves the redox energy in a proton gradient. This Manihot esculenta (Cassava) protein is NAD(P)H-quinone oxidoreductase subunit 4L, chloroplastic.